The following is a 573-amino-acid chain: Splicing factor U2af large subunit A (573 aa).

The disordered stretch occupies residues 1-175 (MSEFEDHEGN…KSKQRVSGFD (175 aa)). Residues 22 to 93 (NGGRDGEIED…ERSRDKDRDH (72 aa)) are compositionally biased toward basic and acidic residues. Over residues 94-105 (RERHHRSSRHRD) the composition is skewed to basic residues. Positions 106 to 141 (HSRERGERRERGGRDDDDYRRSRDRDHDRRRDDRGG) are enriched in basic and acidic residues. Positions 159–169 (TRSRSPSKSKQ) are enriched in basic residues. 3 consecutive RRM domains span residues 239–322 (RRVY…RPSD), 359–437 (DRIF…RANQ), and 478–564 (QVVT…YPED).

The protein belongs to the splicing factor SR family. In terms of assembly, component of the spliceosome. Interacts with SUA. Interacts with SF1 in the nucleus.

The protein resides in the nucleus. In terms of biological role, necessary for the splicing of pre-mRNA. This is Splicing factor U2af large subunit A from Arabidopsis thaliana (Mouse-ear cress).